Reading from the N-terminus, the 175-residue chain is Shikimate kinase (175 aa).

10 to 15 serves as a coordination point for ATP; the sequence is GAGKTT. Thr14 provides a ligand contact to Mg(2+). Positions 32, 56, and 78 each coordinate substrate. Residue Arg116 coordinates ATP. Arg135 lines the substrate pocket.

This sequence belongs to the shikimate kinase family. As to quaternary structure, monomer. Mg(2+) is required as a cofactor.

The protein localises to the cytoplasm. The catalysed reaction is shikimate + ATP = 3-phosphoshikimate + ADP + H(+). It functions in the pathway metabolic intermediate biosynthesis; chorismate biosynthesis; chorismate from D-erythrose 4-phosphate and phosphoenolpyruvate: step 5/7. Its function is as follows. Catalyzes the specific phosphorylation of the 3-hydroxyl group of shikimic acid using ATP as a cosubstrate. This Aromatoleum aromaticum (strain DSM 19018 / LMG 30748 / EbN1) (Azoarcus sp. (strain EbN1)) protein is Shikimate kinase.